The following is a 225-amino-acid chain: DNA repair and recombination protein RadB (225 aa).

This sequence belongs to the eukaryotic RecA-like protein family. RadB subfamily.

In terms of biological role, involved in DNA repair and in homologous recombination. May regulate the cleavage reactions of the branch-structured DNA. Has a very weak ATPase activity that is not stimulated by DNA. Binds DNA but does not promote DNA strands exchange. The chain is DNA repair and recombination protein RadB from Methanococcoides burtonii (strain DSM 6242 / NBRC 107633 / OCM 468 / ACE-M).